A 410-amino-acid chain; its full sequence is MTVFSALLLAGVLSALALAVGGAVGMRLTSRVVEQRQRVATEWSGITVSQMLQCIVTLMPLGAAVVDTHRDVVYLNERAKELGLVRDRQLDDQAWRAARQALGGEDVEFDLSPRKRSATGRSGLSVHGHARLLSEEDRRFAVVFVHDQSDYARMEAARRDFVANVSHELKTPVGAMALLAEALLASADDSETVRRFAEKVLIEANRLGDMVAELIELSRLQGAERLPNMTDVDVDTIVSEAISRHKVAADNADIEVRTDAPSNLRVLGDQTLLVTALANLVSNAIAYSPRGSLVSISRRRRGANIEIAVTDRGIGIAPEDQERVFERFFRGDKARSRATGGSGLGLAIVKHVAANHDGTIRVWSKPGTGSTFTLALPALIEAYHDDERPEQAREPELRSNRSQREEELSR.

2 helical membrane-spanning segments follow: residues 6–26 (ALLL…AVGM) and 46–66 (ITVS…AAVV). One can recognise a Histidine kinase domain in the interval 164–380 (NVSHELKTPV…TFTLALPALI (217 aa)). Histidine 167 carries the post-translational modification Phosphohistidine; by autocatalysis. Residues 385 to 410 (DDERPEQAREPELRSNRSQREEELSR) are disordered.

Autophosphorylated.

The protein resides in the cell membrane. The enzyme catalyses ATP + protein L-histidine = ADP + protein N-phospho-L-histidine.. Its function is as follows. Member of the two-component regulatory system SenX3/RegX3. Autophosphorylates, and then transfers the phosphate group to RegX3. The polypeptide is Sensor-like histidine kinase SenX3 (Mycobacterium bovis (strain ATCC BAA-935 / AF2122/97)).